Here is a 302-residue protein sequence, read N- to C-terminus: Riboflavin transporter (302 aa).

Transmembrane regions (helical) follow at residues 16–36 (AVVGALWMVLAGIAFSLLNVV), 44–64 (LAFPSASAAFWQYGFAFLFSL), 87–107 (VVLAALGVEAWVAGLAAVPIW), 109–129 (AIALVMTSPFFIILGARLFLG), 158–178 (IGWAALLPVLSALLWGASSLI), 191–213 (ITVWLLVLLTPINGGLALAAGFA), 227–247 (GLLTAVAQYFLTLAYAAADAA), and 264–284 (GWLFFGYAPAGYLWLGAALIL). EamA domains lie at 30–151 (FSLL…MIIL) and 170–291 (LLWG…LFIM).

The protein belongs to the drug/metabolite transporter (DMT) superfamily. 10 TMS drug/metabolite exporter (DME) (TC 2.A.7.3) family.

It localises to the cell membrane. Its function is as follows. Transports riboflavin into the cell. Can also transport FMN and FAD. Required for normal nodule development during colonization of pea plant roots. The chain is Riboflavin transporter from Rhizobium johnstonii (strain DSM 114642 / LMG 32736 / 3841) (Rhizobium leguminosarum bv. viciae).